Consider the following 228-residue polypeptide: UPF0173 metal-dependent hydrolase lmo1577 (228 aa).

The protein belongs to the UPF0173 family.

This is UPF0173 metal-dependent hydrolase lmo1577 from Listeria monocytogenes serovar 1/2a (strain ATCC BAA-679 / EGD-e).